The following is an 83-amino-acid chain: Exodeoxyribonuclease 7 small subunit (83 aa).

Belongs to the XseB family. Heterooligomer composed of large and small subunits.

The protein resides in the cytoplasm. It carries out the reaction Exonucleolytic cleavage in either 5'- to 3'- or 3'- to 5'-direction to yield nucleoside 5'-phosphates.. Bidirectionally degrades single-stranded DNA into large acid-insoluble oligonucleotides, which are then degraded further into small acid-soluble oligonucleotides. This is Exodeoxyribonuclease 7 small subunit from Sinorhizobium medicae (strain WSM419) (Ensifer medicae).